Consider the following 114-residue polypeptide: Large ribosomal subunit protein bL19 (114 aa).

This sequence belongs to the bacterial ribosomal protein bL19 family.

Functionally, this protein is located at the 30S-50S ribosomal subunit interface and may play a role in the structure and function of the aminoacyl-tRNA binding site. This chain is Large ribosomal subunit protein bL19 (rplS), found in Listeria monocytogenes serovar 1/2a (strain ATCC BAA-679 / EGD-e).